The following is a 131-amino-acid chain: Profilin (131 aa).

It belongs to the profilin family. As to quaternary structure, occurs in many kinds of cells as a complex with monomeric actin in a 1:1 ratio.

It is found in the cytoplasm. It localises to the cytoskeleton. Its function is as follows. Binds to actin and affects the structure of the cytoskeleton. At high concentrations, profilin prevents the polymerization of actin, whereas it enhances it at low concentrations. By binding to PIP2, it inhibits the formation of IP3 and DG. This is Profilin from Fragaria ananassa (Strawberry).